The primary structure comprises 553 residues: Replication factor C large subunit (553 aa).

50-57 (GGPGVGKT) serves as a coordination point for ATP. The interval 438–553 (GKRPGKPEAG…SKKQRTLFDF (116 aa)) is disordered. Residues 442–451 (GKPEAGEPRE) show a composition bias toward basic and acidic residues. Residues 503 to 513 (EAPMAAAMPAA) show a composition bias toward low complexity. Positions 532–553 (EPEKPPAAEDKCSKKQRTLFDF) are enriched in basic and acidic residues.

It belongs to the activator 1 small subunits family. RfcL subfamily. In terms of assembly, heteromultimer composed of small subunits (RfcS) and large subunits (RfcL).

Functionally, part of the RFC clamp loader complex which loads the PCNA sliding clamp onto DNA. This Methanocella arvoryzae (strain DSM 22066 / NBRC 105507 / MRE50) protein is Replication factor C large subunit.